The following is a 260-amino-acid chain: Histidine-binding periplasmic protein (260 aa).

A signal peptide spans 1–22; it reads MKKLVLSLSLVLAFSSATAAFA. Cys-60 and Cys-67 are disulfide-bonded. 6 residues coordinate L-histidine: Ser-91, Ser-92, Ser-94, Arg-99, Thr-143, and Asp-183.

This sequence belongs to the bacterial solute-binding protein 3 family. The complex is composed of two ATP-binding proteins (HisP), two transmembrane proteins (HisM and HisQ) and a solute-binding protein (HisJ).

It is found in the periplasm. In terms of biological role, part of the ABC transporter complex HisPMQJ involved in histidine transport. Binds histidine. Interacts with HisQMP and stimulates ATPase activity of HisP, which results in histidine translocation. The protein is Histidine-binding periplasmic protein (hisJ) of Escherichia coli O157:H7.